A 285-amino-acid polypeptide reads, in one-letter code: Bifunctional protein FolD (285 aa).

NADP(+)-binding positions include Gly164–Ser166, Ile189, and Ile230.

This sequence belongs to the tetrahydrofolate dehydrogenase/cyclohydrolase family. In terms of assembly, homodimer.

It carries out the reaction (6R)-5,10-methylene-5,6,7,8-tetrahydrofolate + NADP(+) = (6R)-5,10-methenyltetrahydrofolate + NADPH. The catalysed reaction is (6R)-5,10-methenyltetrahydrofolate + H2O = (6R)-10-formyltetrahydrofolate + H(+). Its pathway is one-carbon metabolism; tetrahydrofolate interconversion. In terms of biological role, catalyzes the oxidation of 5,10-methylenetetrahydrofolate to 5,10-methenyltetrahydrofolate and then the hydrolysis of 5,10-methenyltetrahydrofolate to 10-formyltetrahydrofolate. This is Bifunctional protein FolD from Sulfurimonas denitrificans (strain ATCC 33889 / DSM 1251) (Thiomicrospira denitrificans (strain ATCC 33889 / DSM 1251)).